Reading from the N-terminus, the 229-residue chain is Lipoprotein-releasing system ATP-binding protein LolD (229 aa).

In terms of domain architecture, ABC transporter spans 9–228; the sequence is HGLRKIYREA…QDGNLVQVEV (220 aa). 42 to 49 provides a ligand contact to ATP; sequence GSSGSGKS.

It belongs to the ABC transporter superfamily. Lipoprotein translocase (TC 3.A.1.125) family. As to quaternary structure, the complex is composed of two ATP-binding proteins (LolD) and two transmembrane proteins (LolC and LolE).

It is found in the cell inner membrane. Part of the ABC transporter complex LolCDE involved in the translocation of mature outer membrane-directed lipoproteins, from the inner membrane to the periplasmic chaperone, LolA. Responsible for the formation of the LolA-lipoprotein complex in an ATP-dependent manner. In Photobacterium profundum (strain SS9), this protein is Lipoprotein-releasing system ATP-binding protein LolD.